A 118-amino-acid chain; its full sequence is MSTPNSYDDEELEELLRRKAAQEQKRIEEERKRKAELESQKESILRVILTPEARQRLTNIKLVKPEFAESLENQLIALAQSGRIKIPITDEELKQILEQISQQNRRDFKIQIRERGWK.

Belongs to the PDCD5 family.

This Saccharolobus solfataricus (strain ATCC 35092 / DSM 1617 / JCM 11322 / P2) (Sulfolobus solfataricus) protein is DNA-binding protein SSO0352.